We begin with the raw amino-acid sequence, 360 residues long: MKKFAGLITASFVAATLTACNDKDAKQETAKATAAANDTVYLYTWTEYVPDGLLDEFTKETGIKVIVSSLESNETMYAKLKTQGESGGYDVIAPSNYFVSKMAREGMLKELDHSKLPVLKELDPDWLNKPYDKGNKYSLPQLLGAPGIAFNTNTYKGEQFTSWADLWKPEFANKVQLLDDAREVFNIALLKIGQDPNTQDPAIIKQAYEELLKLRPNVLSFNSDNPANSFISGEVEVGQLWNGSVRIAKKEKAPLNMVFPKEGPVLWVDTLAIPATAKNSEGAHKLINYMLGKKTAEKLTLAIGYPTSNIEAKKALPKEITEDPAIYPSADILKNSHWQDDVGDAIQFYEQYYQELKAAK.

An N-terminal signal peptide occupies residues 1 to 16 (MKKFAGLITASFVAAT).

This sequence belongs to the bacterial solute-binding protein PotD/PotF family.

It localises to the periplasm. Required for the activity of the bacterial periplasmic transport system of putrescine and spermidine. Polyamine binding protein. This Haemophilus influenzae (strain ATCC 51907 / DSM 11121 / KW20 / Rd) protein is Spermidine/putrescine-binding periplasmic protein 1 (potD-B).